A 652-amino-acid chain; its full sequence is DNA ligase (652 aa).

NAD(+) contacts are provided by residues D29–D33, S78–L79, and E107. Catalysis depends on K109, which acts as the N6-AMP-lysine intermediate. Residues R130, E164, K278, and K302 each coordinate NAD(+). Zn(2+)-binding residues include C395, C398, C413, and C418. The BRCT domain maps to S577–L652.

The protein belongs to the NAD-dependent DNA ligase family. LigA subfamily. Requires Mg(2+) as cofactor. Mn(2+) is required as a cofactor.

The enzyme catalyses NAD(+) + (deoxyribonucleotide)n-3'-hydroxyl + 5'-phospho-(deoxyribonucleotide)m = (deoxyribonucleotide)n+m + AMP + beta-nicotinamide D-nucleotide.. Its function is as follows. DNA ligase that catalyzes the formation of phosphodiester linkages between 5'-phosphoryl and 3'-hydroxyl groups in double-stranded DNA using NAD as a coenzyme and as the energy source for the reaction. It is essential for DNA replication and repair of damaged DNA. In Streptococcus agalactiae serotype V (strain ATCC BAA-611 / 2603 V/R), this protein is DNA ligase.